The primary structure comprises 140 residues: Vesicle transport protein GOT1 (140 aa).

A run of 4 helical transmembrane segments spans residues 12-32 (IGLG…IFVF), 35-55 (GLIA…IGIN), 71-91 (ISFG…GLLL), and 96-116 (FLVL…RIPL).

This sequence belongs to the GOT1 family. As to quaternary structure, homodimer. No interactions with STL1, STL2, CESA1, CESA3, CESA4, CESA6, CESA7 or CESA8.

Its subcellular location is the golgi apparatus membrane. Its function is as follows. May be involved in fusion of ER-derived transport vesicles with the Golgi complex. In Arabidopsis thaliana (Mouse-ear cress), this protein is Vesicle transport protein GOT1.